Consider the following 2527-residue polypeptide: Neurogenic locus notch homolog protein 1 (2527 aa).

The N-terminal stretch at 1 to 36 is a signal peptide; sequence MGRSDSRAGALLEGGCEQNIDPRRAAHCHHPRLATS. At 37–1741 the chain is on the extracellular side; it reads SLRCSQPSGT…VEPPLPSQLH (1705 aa). Disulfide bonds link cysteine 40-cysteine 53, cysteine 47-cysteine 62, cysteine 64-cysteine 73, cysteine 79-cysteine 90, cysteine 84-cysteine 103, cysteine 105-cysteine 114, cysteine 122-cysteine 133, cysteine 127-cysteine 143, cysteine 145-cysteine 154, cysteine 160-cysteine 171, cysteine 165-cysteine 180, cysteine 182-cysteine 191, cysteine 198-cysteine 211, cysteine 205-cysteine 220, cysteine 222-cysteine 231, cysteine 238-cysteine 249, cysteine 243-cysteine 259, cysteine 261-cysteine 270, cysteine 277-cysteine 288, cysteine 282-cysteine 297, cysteine 299-cysteine 308, cysteine 315-cysteine 328, cysteine 322-cysteine 337, cysteine 339-cysteine 348, cysteine 355-cysteine 366, cysteine 360-cysteine 375, cysteine 377-cysteine 386, cysteine 392-cysteine 403, cysteine 397-cysteine 414, cysteine 416-cysteine 425, cysteine 432-cysteine 445, cysteine 439-cysteine 454, and cysteine 456-cysteine 465. An N-linked (GlcNAc...) asparagine glycan is attached at asparagine 57. EGF-like domains follow at residues 75 to 115, 118 to 155, and 156 to 192; these read DPNP…PLCL, LDNA…KSCQ, and QADP…PTCR. A glycan (O-linked (Glc...) serine) is linked at serine 81. The O-linked (Fuc...) threonine glycan is linked to threonine 89. O-linked (Fuc...) threonine glycosylation occurs at threonine 132. Serine 162 carries O-linked (Glc...) serine glycosylation. An EGF-like 4; calcium-binding domain is found at 194–232; sequence DVNECSQNPGLCRHGGTCHNEIGSYRCVCRATHTGPHCE. Threonine 210 carries O-linked (Fuc...) threonine glycosylation. In terms of domain architecture, EGF-like 5 spans 234-271; that stretch reads PYVPCSPSPCQNGGTCRPTGDTTHECACLPGFAGQNCE. Threonine 248 is a glycosylation site (O-linked (Fuc...) threonine; alternate). Threonine 248 carries O-linked (GalNAc...) threonine; alternate glycosylation. Residues 273–309 form the EGF-like 6; calcium-binding domain; that stretch reads NVDDCPGNNCKNGGACVDGVNTYNCRCPPEWTGQYCT. Residues 311–349 form the EGF-like 7; calcium-binding domain; the sequence is DVDECQLMPNACQNGGTCHNTHGGYNCVCVNGWTGEDCS. Threonine 327 carries an O-linked (Fuc...) threonine glycan. Residues 351–387 enclose the EGF-like 8; calcium-binding domain; sequence NIDDCASAACFQGATCHDRVASFYCECPHGRTGLLCH. Serine 357 is a glycosylation site (O-linked (Glc...) serine). Threonine 365 is a glycosylation site (O-linked (Fuc...) threonine). The EGF-like 9 domain occupies 388–426; that stretch reads LNDACISNPCNEGSNCDTNPVNGKAICTCPSGYTGPACS. Residue serine 394 is glycosylated (O-linked (Glc...) serine). An EGF-like 10; calcium-binding domain is found at 428–466; the sequence is DVDECALGANPCEHAGKCLNTLGSFECQCLQGYTGPRCE. Residues 436–437 are interaction with DLL4; the sequence is AN. Ca(2+)-binding residues include threonine 448 and serine 451. Residue serine 451 is glycosylated (O-linked (Glc...) serine). Residues 464-468 are interaction with DLL4; sequence RCEID. Residues aspartate 468, valine 469, and glutamate 471 each coordinate Ca(2+). In terms of domain architecture, EGF-like 11; calcium-binding spans 468–504; it reads DVNECISNPCQNDATCLDQIGEFQCICMPGYEGVYCE. Disulfide bonds link cysteine 472-cysteine 483, cysteine 477-cysteine 492, and cysteine 494-cysteine 503. Serine 474 is a glycosylation site (O-linked (Glc...) serine). Threonine 482 is a glycosylation site (O-linked (Fuc...) threonine). Ca(2+)-binding residues include aspartate 485 and glutamine 486. Residues asparagine 506, threonine 507, and glutamate 509 each coordinate Ca(2+). The EGF-like 12; calcium-binding domain occupies 506 to 542; it reads NTDECASSPCLHNGHCMDKINEFLCQCPKGFSGHLCQ. 28 disulfide bridges follow: cysteine 510-cysteine 521, cysteine 515-cysteine 530, cysteine 532-cysteine 541, cysteine 548-cysteine 559, cysteine 553-cysteine 568, cysteine 570-cysteine 579, cysteine 586-cysteine 596, cysteine 591-cysteine 605, cysteine 607-cysteine 616, cysteine 623-cysteine 634, cysteine 628-cysteine 643, cysteine 645-cysteine 654, cysteine 661-cysteine 671, cysteine 666-cysteine 680, cysteine 682-cysteine 691, cysteine 698-cysteine 709, cysteine 703-cysteine 718, cysteine 720-cysteine 729, cysteine 736-cysteine 746, cysteine 741-cysteine 755, cysteine 757-cysteine 766, cysteine 773-cysteine 784, cysteine 778-cysteine 793, cysteine 795-cysteine 804, cysteine 811-cysteine 822, cysteine 816-cysteine 831, cysteine 833-cysteine 842, and cysteine 849-cysteine 860. O-linked (Glc...) serine glycosylation occurs at serine 512. Residues aspartate 523 and lysine 524 each contribute to the Ca(2+) site. Residues 544 to 580 form the EGF-like 13; calcium-binding domain; the sequence is DVDECASTPCKNGAKCLDGPNTYTCVCTEGYTGTHCE. An O-linked (Glc...) serine glycan is attached at serine 550. Positions 582–617 constitute an EGF-like 14; calcium-binding domain; it reads DIDECDPDPCHYGFCKDGVATFTCLCQPGYTGHHCE. One can recognise an EGF-like 15; calcium-binding domain in the interval 619–655; that stretch reads NINECHSQPCRHGGTCQDRDNSYLCLCLKGTTGPNCE. O-linked (Glc...) serine glycosylation occurs at serine 625. The O-linked (Fuc...) threonine glycan is linked to threonine 633. The region spanning 657–692 is the EGF-like 16; calcium-binding domain; the sequence is NLDDCASNPCDSGTCLDKIDGYECACEPGYTGSMCN. O-linked (Glc...) serine glycosylation is present at serine 663. Positions 694–730 constitute an EGF-like 17; calcium-binding domain; that stretch reads NIDECAGSPCHNGGTCEDGIAGFTCRCPEGYHDPTCL. Threonine 708 is a glycosylation site (O-linked (Fuc...) threonine). Residues 732 to 767 enclose the EGF-like 18; calcium-binding domain; sequence EVNECNSNPCIHGACRDGLNGYKCDCAPGWSGTNCD. Residue serine 738 is glycosylated (O-linked (Glc...) serine). The region spanning 769–805 is the EGF-like 19 domain; that stretch reads NNNECESNPCVNGGTCKDMTSGYVCTCREGFSGPNCQ. Serine 775 carries O-linked (Glc...) serine glycosylation. Threonine 783 carries O-linked (Fuc...) threonine glycosylation. Serine 800 is a glycosylation site (O-linked (GlcNAc) serine). Residues 807–843 enclose the EGF-like 20; calcium-binding domain; the sequence is NINECASNPCLNQGTCIDDVAGYKCNCPLPYTGATCE. Serine 813 carries an O-linked (Glc...) serine glycan. An O-linked (Fuc...) threonine glycan is attached at threonine 821. One can recognise an EGF-like 21 domain in the interval 845 to 883; it reads VLAPCATSPCKNSGVCKESEDYESFSCVCPTGWQGQTCE. In terms of domain architecture, EGF-like 22; calcium-binding spans 885 to 921; that stretch reads DINECVKSPCRHGASCQNTNGSYRCLCQAGYTGRNCE. An N-linked (GlcNAc...) asparagine glycan is attached at asparagine 904. Threonine 916 carries O-linked (GlcNAc) threonine glycosylation. The EGF-like 23 domain maps to 923-959; the sequence is DIDDCRPNPCHNGGSCTDGINMAFCDCLPGFQGAFCE. An O-linked (Fuc) serine glycan is attached at serine 937. The region spanning 961 to 997 is the EGF-like 24; calcium-binding domain; the sequence is DINECASNPCRNGANCTDCVDSYTCTCPAGFNGIHCE. O-linked (Glc...) serine glycosylation is present at serine 967. Asparagine 975 is a glycosylation site (N-linked (GlcNAc...) asparagine). EGF-like domains follow at residues 999-1035, 1037-1073, 1075-1111, 1113-1159, and 1161-1197; these read NTPD…SYCQ, DVNE…LNCQ, LVHW…FNCD, LSVS…SYCE, and EVDE…SNCS. An O-linked (Fuc...) threonine glycan is attached at threonine 1013. A glycan (O-linked (Glc...) serine) is linked at serine 1043. O-linked (Fuc...) threonine glycosylation is present at threonine 1051. O-linked (Glc...) serine glycosylation is present at serine 1081. An intrachain disulfide couples cysteine 1117 to cysteine 1138. A glycan (O-linked (Fuc...) threonine) is linked at threonine 1175. N-linked (GlcNAc...) asparagine glycosylation occurs at asparagine 1195. Residues 1199–1235 form the EGF-like 30; calcium-binding domain; that stretch reads EINECLSQPCQNGGTCIDLTNTYKCSCPRGTQGVHCE. Serine 1205 carries O-linked (Glc...) serine glycosylation. O-linked (Fuc...) threonine glycosylation is present at threonine 1213. The EGF-like 31; calcium-binding domain maps to 1237 to 1281; that stretch reads NVDDCHPHLDPASRSPKCFNNGTCVDQVGGYSCTCPPGFVGERCE. A glycan (N-linked (GlcNAc...) asparagine) is linked at asparagine 1257. EGF-like domains lie at 1283-1321, 1323-1362, 1364-1400, and 1403-1442; these read DINE…RRCE, VING…ATCE, DART…PECQ, and ASSP…LLCH. The O-linked (Glc...) serine glycan is linked to serine 1289. An O-linked (Fuc...) threonine glycan is attached at threonine 1378. O-linked (GlcNAc...) threonine glycosylation is present at threonine 1395. A glycan (O-linked (Fuc...) threonine; alternate) is linked at threonine 1418. O-linked (GalNAc...) threonine; alternate glycosylation occurs at threonine 1418. 3 LNR repeats span residues 1465–1505, 1506–1547, and 1548–1587; these read CELP…PWKN, CTQS…CNPL, and YDQY…RLAA. Ca(2+)-binding residues include aspartate 1473, asparagine 1476, aspartate 1491, and aspartate 1494. An N-linked (GlcNAc...) asparagine glycan is attached at asparagine 1505. N-linked (GlcNAc...) asparagine glycosylation is present at asparagine 1603. A glycan (O-linked (GalNAc...) threonine) is linked at threonine 1731. Residues 1734–1766 are interaction with PSEN1; sequence PPLPSQLHLMYLAAAAFVLLFFVGCGVLLSRKR. Residues 1742-1762 form a helical membrane-spanning segment; the sequence is LMYLAAAAFVLLFFVGCGVLL. Topologically, residues 1763–2527 are cytoplasmic; sequence SRKRRRQHGQ…QITHIPEAFK (765 aa). A Glycyl lysine isopeptide (Lys-Gly) (interchain with G-Cter in ubiquitin) cross-link involves residue lysine 1765. A disordered region spans residues 1786 to 1814; that stretch reads KKKRREPLGEDSVGLKPLKNASDGALMDD. Threonine 1867 is subject to Phosphothreonine. ANK repeat units follow at residues 1933-1962, 1966-1996, 2000-2029, 2033-2062, and 2066-2095; these read TGET…DANI, MGRT…DLDA, DGTT…DVNA, LGKS…NKDM, and KEET…NRDI. Residues 1953–1961 form an HIF1AN-binding region; the sequence is LLEASADAN. Asparagine 1961 bears the (3S)-3-hydroxyasparagine; by HIF1AN; partial mark. The HIF1AN-binding stretch occupies residues 2020–2028; it reads LINSHADVN. The residue at position 2028 (asparagine 2028) is a (3S)-3-hydroxyasparagine; by HIF1AN. 3 disordered regions span residues 2157–2201, 2378–2424, and 2436–2527; these read SATQ…DSSS, QPQN…SLPV, and PTSL…EAFK. Residues 2378–2391 show a composition bias toward low complexity; that stretch reads QPQNLQPPSQPHLS. Over residues 2436–2474 the composition is skewed to polar residues; sequence PTSLPSSMVPPMTTTQFLTPPSQHSYSSSPVDNTPSHQL. Over residues 2484 to 2499 the composition is skewed to low complexity; the sequence is PSPESPDQWSSSSPHS. Over residues 2500 to 2520 the composition is skewed to polar residues; that stretch reads NISDWSEGISSPPTSMPSQIT.

It belongs to the NOTCH family. Heterodimer of a C-terminal fragment N(TM) and an N-terminal fragment N(EC) which are probably linked by disulfide bonds. Interacts with DNER, DTX1, DTX2 and RBPJ/RBPSUH. Also interacts with MAML1, MAML2 and MAML3 which act as transcriptional coactivators for NOTCH1. Notch 1 intracellular domain interacts with SNW1; the interaction involves multimerized NOTCH1 NICD and is implicated in a formation of an intermediate preactivation complex which associates with DNA-bound CBF-1/RBPJ. The activated membrane-bound form interacts with AAK1 which promotes NOTCH1 stabilization. Forms a trimeric complex with FBXW7 and SGK1. Interacts with HIF1AN. HIF1AN negatively regulates the function of notch intracellular domain (NICD), accelerating myogenic differentiation. Interacts (via NICD) with SNAI1 (via zinc fingers); the interaction induces SNAI1 degradation via MDM2-mediated ubiquitination and inhibits SNAI1-induced cell invasion. Interacts (via NICD) with MDM2A. Interacts (via NICD) with BCL6; the interaction decreases MAML1 recruitment by NOTCH1 NICD on target genes DNA and inhibits NOTCH1 transactivation activity. Interacts with THBS4. Interacts (via the EGF-like repeat region) with CCN3 (via CTCK domain). Interacts (via EGF-like domains) with DLL4 (via N-terminal DSL and MNNL domains). Interacts with ZMIZ1. Interacts (via NICD domain) with MEGF10 (via the cytoplasmic domain). Interacts with DLL1 and JAG1. Interacts (via NICD domain) with PRAG1. Forms a complex with PRAG1, N1ICD and MAML1, in a MAML1-dependent manner. Interacts (via transmembrane region) with PSEN1; the interaction is direct. Interacts with ZFP64. Post-translationally, synthesized in the endoplasmic reticulum as an inactive form which is proteolytically cleaved by a furin-like convertase in the trans-Golgi network before it reaches the plasma membrane to yield an active, ligand-accessible form. Cleavage results in a C-terminal fragment N(TM) and a N-terminal fragment N(EC). Following ligand binding, it is cleaved by ADAM17 to yield a membrane-associated intermediate fragment called notch extracellular truncation (NEXT). Following endocytosis, this fragment is then cleaved by one of the catalytic subunits of gamma-secretase (PSEN1 or PSEN2) to release a Notch-derived peptide containing the intracellular domain (NICD) from the membrane. In terms of processing, phosphorylated. O-linked glycosylation by GALNT11 is involved in determination of left/right symmetry: glycosylation promotes activation of NOTCH1, possibly by promoting cleavage by ADAM17, modulating the balance between motile and immotile (sensory) cilia at the left-right organiser (LRO). O-glycosylated on the EGF-like domains. O-glucosylated at Ser-451 by KDELC1 and KDELC2. Contains both O-linked fucose and O-linked glucose in the EGF-like domains 11, 12 and 13, which are interacting with the residues on DLL4. MFNG-, RFNG- and LFNG-mediated modification of O-fucose residues at specific EGF-like domains results in inhibition of its activation by JAG1 and enhancement of its activation by DLL1 via an increased binding to DLL1. Post-translationally, ubiquitinated. Undergoes 'Lys-29'-linked polyubiquitination by ITCH; promotes the lysosomal degradation of non-activated internalized NOTCH1. Deubiquitination by USP12 is required for transport of internalized non-activated receptor from late endosomes to lysosomes for degradation. Monoubiquitination at Lys-1765 is required for activation by gamma-secretase cleavage, it promotes interaction with AAK1, which stabilizes it. Deubiquitination by EIF3F is necessary for nuclear import of activated Notch. In terms of processing, hydroxylated at Asn-1961 by HIF1AN. Hydroxylated at Asn-2028 by HIF1AN. Hydroxylation reduces affinity for HI1AN and may thus indirectly modulate negative regulation of NICD.

It is found in the cell membrane. The protein resides in the late endosome membrane. The protein localises to the nucleus. Its function is as follows. Functions as a receptor for membrane-bound ligands Jagged-1 (JAG1), Jagged-2 (JAG2) and Delta-1 (DLL1) to regulate cell-fate determination. Upon ligand activation through the released notch intracellular domain (NICD) it forms a transcriptional activator complex with RBPJ/RBPSUH and activates genes of the enhancer of split locus. Affects the implementation of differentiation, proliferation and apoptotic programs. Involved in angiogenesis; negatively regulates endothelial cell proliferation and migration and angiogenic sprouting. Involved in the maturation of both CD4(+) and CD8(+) cells in the thymus. Important for follicular differentiation and possibly cell fate selection within the follicle. During cerebellar development, functions as a receptor for neuronal DNER and is involved in the differentiation of Bergmann glia. Represses neuronal and myogenic differentiation. May play an essential role in postimplantation development, probably in some aspect of cell specification and/or differentiation. May be involved in mesoderm development, somite formation and neurogenesis. May enhance HIF1A function by sequestering HIF1AN away from HIF1A. Required for the THBS4 function in regulating protective astrogenesis from the subventricular zone (SVZ) niche after injury. Involved in determination of left/right symmetry by modulating the balance between motile and immotile (sensory) cilia at the left-right organiser (LRO). The protein is Neurogenic locus notch homolog protein 1 (NOTCH1) of Cricetulus griseus (Chinese hamster).